The primary structure comprises 918 residues: Cell cycle and apoptosis regulator protein 2 (918 aa).

A disordered region spans residues 1 to 35; sequence MSQFKRQRINPLPGGRNFSGTASTSLLGPPPGLLT. Position 35 is a phosphothreonine (threonine 35). Lysine 112 is modified (N6-acetyllysine; by KAT8). Residue lysine 123 is modified to N6-methyllysine. A Phosphoserine modification is found at serine 124. Disordered regions lie at residues 179–219, 446–510, and 568–637; these read NRFP…KPRH, KAAE…PAVI, and VSPP…ASED. Position 180 is an omega-N-methylarginine (arginine 180). At lysine 215 the chain carries N6-acetyllysine; by KAT8. Composition is skewed to low complexity over residues 447-468 and 482-492; these read AAEA…EQAP and AETPEATTQQE. A Phosphothreonine; by ATM, ATR and CK2 modification is found at threonine 454. Threonine 484 bears the Phosphothreonine mark. Position 569 is a phosphoserine (serine 569). Residues 572-597 are compositionally biased toward basic and acidic residues; it reads EPEKEEAAKEEEAIKEEVVKEPKDEA. Lysine 586 is covalently cross-linked (Glycyl lysine isopeptide (Lys-Gly) (interchain with G-Cter in SUMO2 and SUMO3); alternate). Lysine 586 participates in a covalent cross-link: Glycyl lysine isopeptide (Lys-Gly) (interchain with G-Cter in SUMO2); alternate. Residues 605-665 are interaction with MCC; sequence ESEAPLKEDG…EEFAGAKLED (61 aa). Phosphoserine is present on residues serine 622, serine 670, serine 673, serine 676, serine 682, and serine 803. An interaction with NR1D1 region spans residues 699-918; the sequence is DCLLAFVFFD…VEKEEPAPSN (220 aa). Positions 824 to 904 form a coiled coil; sequence LENRIHTLEL…QLEIQRVVEK (81 aa). Threonine 892 is subject to Phosphothreonine.

In terms of assembly, component of the DBIRD complex. Interacts with ZNF326/ZIRD; the interaction is direct. Interacts (via N-terminus) with SIRT1, which inhibits the deacetylation of substrates. Interacts (via N-terminus) with SUV39H1; this interaction abolishes the interaction with SIRT1. Component of a nuclear receptor-mediated transcription complex composed of at least ZNF335, CCAR2 and EMSY; the complex stimulates the transcription of nuclear receptor target genes such as SOX9 and HOXA1. Within the complex interacts with EMSY and interacts with ZNF335 (via C-terminus). Components of this complex may associate with components of a histone methylation complex to form a complex at least composed of ZNF335, HCFC1, CCAR2, EMSY, MKI67, RBBP5, ASH2L and WDR5. Within this complex, interacts with ASH2L. Interacts with NR1D1. Interacts (via N-terminus) with ESR1 and ESR2. Interacts (via N-terminus) with HDAC3 (via C-terminus). Interacts with HDAC1 and MED2F. Interacts with MCC. Interacts (via N-terminus) with NR1H2 and NR1H3 in a ligand-independent manner. Interacts with CSNK2A1. Interacts (via N-terminus) with p53/TP53. Interacts (via N-terminus) with BRCA1 (via the BRCT domains). Interacts (via N-terminus) with CHEK2 (via protein kinase domain). Interacts with PSEM3. Interacts (via N-terminus) with PSIA3 and SENP1. The sumoylated form shows a preferential interaction with SIRT1 as compared to its unmodified form. Interacts with CECR2; may form part of the CERF-1 and/or CEF-5 ISWI chromatin remodeling complexes in embryonic stem cells. In terms of processing, ATM/ATR-mediated phosphorylation at Thr-454 upon DNA damage promotes binding to SIRT1. Phosphorylation at Thr-454 promotes its sumoylation by switching the binding partner of CCAR2 from SENP1 to PIAS3. Post-translationally, acetylation at Lys-112 and Lys-215 by KAT8 prevents inhibitory binding to SIRT1 and increases its deacetylase activity. Genotoxic stress induces its sumoylation and sumoylation promotes the SIRT1-CCAR2 interaction which in turn inhibits SIRT1-mediated deacetylation of p53/TP53. Sumoylation leads to transcriptional activation of p53/TP53 by sequestering SIRT1 from p53/TP53. Desumoylated by SENP1.

It is found in the nucleus. The protein localises to the cytoplasm. Its subcellular location is the cytoskeleton. It localises to the spindle. Functionally, core component of the DBIRD complex, a multiprotein complex that acts at the interface between core mRNP particles and RNA polymerase II (RNAPII) and integrates transcript elongation with the regulation of alternative splicing: the DBIRD complex affects local transcript elongation rates and alternative splicing of a large set of exons embedded in (A + T)-rich DNA regions. Inhibits SIRT1 deacetylase activity leading to increasing levels of p53/TP53 acetylation and p53-mediated apoptosis. Inhibits SUV39H1 methyltransferase activity. Mediates ligand-dependent transcriptional activation by nuclear hormone receptors. Plays a critical role in maintaining genomic stability and cellular integrity following UV-induced genotoxic stress. Regulates the circadian expression of the core clock components NR1D1 and BMAL1. Enhances the transcriptional repressor activity of NR1D1 through stabilization of NR1D1 protein levels by preventing its ubiquitination and subsequent degradation. Represses the ligand-dependent transcriptional activation function of ESR2. Acts as a regulator of PCK1 expression and gluconeogenesis by a mechanism that involves, at least in part, both NR1D1 and SIRT1. Negatively regulates the deacetylase activity of HDAC3 and can alter its subcellular localization. Positively regulates the beta-catenin pathway (canonical Wnt signaling pathway) and is required for MCC-mediated repression of the beta-catenin pathway. Represses ligand-dependent transcriptional activation function of NR1H2 and NR1H3 and inhibits the interaction of SIRT1 with NR1H3. Plays an important role in tumor suppression through p53/TP53 regulation; stabilizes p53/TP53 by affecting its interaction with ubiquitin ligase MDM2. Represses the transcriptional activator activity of BRCA1. Inhibits SIRT1 in a CHEK2 and PSEM3-dependent manner and inhibits the activity of CHEK2 in vitro. This Pongo abelii (Sumatran orangutan) protein is Cell cycle and apoptosis regulator protein 2 (CCAR2).